The sequence spans 356 residues: Glycerol-3-phosphate dehydrogenase [NAD(P)+] (356 aa).

Residues tryptophan 12, arginine 32, arginine 33, and lysine 117 each contribute to the NADPH site. Positions 117, 151, and 153 each coordinate sn-glycerol 3-phosphate. Residue alanine 155 coordinates NADPH. 4 residues coordinate sn-glycerol 3-phosphate: lysine 206, aspartate 265, arginine 276, and asparagine 277. The Proton acceptor role is filled by lysine 206. Residue arginine 276 coordinates NADPH. NADPH is bound by residues leucine 309 and glutamate 311.

The protein belongs to the NAD-dependent glycerol-3-phosphate dehydrogenase family.

It localises to the cytoplasm. It carries out the reaction sn-glycerol 3-phosphate + NAD(+) = dihydroxyacetone phosphate + NADH + H(+). It catalyses the reaction sn-glycerol 3-phosphate + NADP(+) = dihydroxyacetone phosphate + NADPH + H(+). The protein operates within membrane lipid metabolism; glycerophospholipid metabolism. In terms of biological role, catalyzes the reduction of the glycolytic intermediate dihydroxyacetone phosphate (DHAP) to sn-glycerol 3-phosphate (G3P), the key precursor for phospholipid synthesis. The polypeptide is Glycerol-3-phosphate dehydrogenase [NAD(P)+] (Treponema pallidum (strain Nichols)).